Consider the following 273-residue polypeptide: Hydroxyethylthiazole kinase (273 aa).

Methionine 49 contacts substrate. ATP-binding residues include lysine 125 and threonine 171. Glycine 198 serves as a coordination point for substrate.

This sequence belongs to the Thz kinase family. Requires Mg(2+) as cofactor.

The enzyme catalyses 5-(2-hydroxyethyl)-4-methylthiazole + ATP = 4-methyl-5-(2-phosphooxyethyl)-thiazole + ADP + H(+). It participates in cofactor biosynthesis; thiamine diphosphate biosynthesis; 4-methyl-5-(2-phosphoethyl)-thiazole from 5-(2-hydroxyethyl)-4-methylthiazole: step 1/1. Functionally, catalyzes the phosphorylation of the hydroxyl group of 4-methyl-5-beta-hydroxyethylthiazole (THZ). This Natranaerobius thermophilus (strain ATCC BAA-1301 / DSM 18059 / JW/NM-WN-LF) protein is Hydroxyethylthiazole kinase.